The sequence spans 357 residues: Sulfate/thiosulfate import ATP-binding protein CysA (357 aa).

In terms of domain architecture, ABC transporter spans 3–237 (IQIQGVSKQY…PASPFVYDFL (235 aa)). 35–42 (GPSGSGKT) is a binding site for ATP.

It belongs to the ABC transporter superfamily. Sulfate/tungstate importer (TC 3.A.1.6) family. As to quaternary structure, the complex is composed of two ATP-binding proteins (CysA), two transmembrane proteins (CysT and CysW) and a solute-binding protein (CysP).

It is found in the cell membrane. It catalyses the reaction sulfate(out) + ATP + H2O = sulfate(in) + ADP + phosphate + H(+). The enzyme catalyses thiosulfate(out) + ATP + H2O = thiosulfate(in) + ADP + phosphate + H(+). In terms of biological role, part of the ABC transporter complex CysAWTP involved in sulfate/thiosulfate import. Responsible for energy coupling to the transport system. The sequence is that of Sulfate/thiosulfate import ATP-binding protein CysA from Bacillus cereus (strain ATCC 10987 / NRS 248).